The following is a 410-amino-acid chain: Tryptophan synthase beta chain (410 aa).

Lys-104 bears the N6-(pyridoxal phosphate)lysine mark.

It belongs to the TrpB family. In terms of assembly, tetramer of two alpha and two beta chains. Requires pyridoxal 5'-phosphate as cofactor.

It catalyses the reaction (1S,2R)-1-C-(indol-3-yl)glycerol 3-phosphate + L-serine = D-glyceraldehyde 3-phosphate + L-tryptophan + H2O. Its pathway is amino-acid biosynthesis; L-tryptophan biosynthesis; L-tryptophan from chorismate: step 5/5. The beta subunit is responsible for the synthesis of L-tryptophan from indole and L-serine. In Thermosynechococcus vestitus (strain NIES-2133 / IAM M-273 / BP-1), this protein is Tryptophan synthase beta chain.